A 137-amino-acid polypeptide reads, in one-letter code: L-ectoine synthase (137 aa).

The disordered stretch occupies residues 115-137; the sequence is EVHDESGAYPADPELAREPVAAD.

The protein belongs to the ectoine synthase family.

The enzyme catalyses (2S)-4-acetamido-2-aminobutanoate = L-ectoine + H2O. The protein operates within amine and polyamine biosynthesis; ectoine biosynthesis; L-ectoine from L-aspartate 4-semialdehyde: step 3/3. In terms of biological role, catalyzes the circularization of gamma-N-acetyl-alpha,gamma-diaminobutyric acid (ADABA) to ectoine (1,4,5,6-tetrahydro-2-methyl-4-pyrimidine carboxylic acid), which is an excellent osmoprotectant. The polypeptide is L-ectoine synthase (Sphingopyxis alaskensis (strain DSM 13593 / LMG 18877 / RB2256) (Sphingomonas alaskensis)).